The following is a 205-amino-acid chain: Low-density lipoprotein receptor class A domain-containing protein 1 (205 aa).

Residues 43–63 (LLLLLATVAALIALVTILGLP) form a helical membrane-spanning segment. The 44-residue stretch at 71–114 (ACITLTNRTGFLCHDQRSCIPASGVCDGVRTCTHGEDEDESLCR) folds into the LDL-receptor class A 1 domain. 6 cysteine pairs are disulfide-bonded: C72–C89, C83–C102, C96–C113, C141–C160, C163–C180, and C170–C193. The region spanning 115–161 (DVPQSLPHFLVAHCGDPASWIYSDQKCDGTNNCGDCSDELSPVTVCP) is the LDL-receptor class A 2; atypical domain. Positions 162–203 (PCGPGWWRCPSTFFKYCDCIPRHLCRDHVQHCSDWSDEYACP) constitute an LDL-receptor class A 3; atypical domain.

The protein belongs to the LDLR family.

The protein resides in the membrane. This chain is Low-density lipoprotein receptor class A domain-containing protein 1 (LDLRAD1), found in Homo sapiens (Human).